The sequence spans 132 residues: Small ribosomal subunit protein uS11 (132 aa).

It belongs to the universal ribosomal protein uS11 family. Part of the 30S ribosomal subunit. Interacts with proteins S7 and S18. Binds to IF-3.

Its function is as follows. Located on the platform of the 30S subunit, it bridges several disparate RNA helices of the 16S rRNA. Forms part of the Shine-Dalgarno cleft in the 70S ribosome. This chain is Small ribosomal subunit protein uS11, found in Oenococcus oeni (strain ATCC BAA-331 / PSU-1).